We begin with the raw amino-acid sequence, 235 residues long: tRNA (guanine-N(1)-)-methyltransferase (235 aa).

S-adenosyl-L-methionine contacts are provided by residues G114 and 134–139; that span reads IGDYIL.

The protein belongs to the RNA methyltransferase TrmD family. As to quaternary structure, homodimer.

The protein localises to the cytoplasm. The catalysed reaction is guanosine(37) in tRNA + S-adenosyl-L-methionine = N(1)-methylguanosine(37) in tRNA + S-adenosyl-L-homocysteine + H(+). In terms of biological role, specifically methylates guanosine-37 in various tRNAs. The polypeptide is tRNA (guanine-N(1)-)-methyltransferase (Ehrlichia ruminantium (strain Gardel)).